A 223-amino-acid polypeptide reads, in one-letter code: Small ribosomal subunit protein uS3 (223 aa).

In terms of domain architecture, KH type-2 spans 39 to 107; it reads IRQFLRKKPS…EVWLEIAEIK (69 aa).

It belongs to the universal ribosomal protein uS3 family. Part of the 30S ribosomal subunit. Forms a tight complex with proteins S10 and S14.

Functionally, binds the lower part of the 30S subunit head. Binds mRNA in the 70S ribosome, positioning it for translation. The sequence is that of Small ribosomal subunit protein uS3 from Chlamydia pneumoniae (Chlamydophila pneumoniae).